The primary structure comprises 284 residues: Ermin (284 aa).

The disordered stretch occupies residues 1-23 (MTDVPATFTQAECNGDKPPENGQ). Serine 73 carries the post-translational modification Phosphoserine. A disordered region spans residues 110–251 (REGHQWEKIP…PTLGKKSDIS (142 aa)). Composition is skewed to basic and acidic residues over residues 126–140 (EIRRQKERITEQPLK) and 171–183 (LHSKHDEEQKVWD). A compositionally biased stretch (acidic residues) spans 184 to 200 (EEIDDDDDDNCNNDEDE). A compositionally biased stretch (basic and acidic residues) spans 201–220 (VRVIEFKKKHEEVSQFKEEG). A phosphoserine mark is found at serine 214, serine 226, serine 230, and serine 233. The span at 225 to 235 (DSPLSSASSQA) shows a compositional bias: low complexity. Residue threonine 237 is modified to Phosphothreonine. Residues 265-284 (KIRKGNTKQRIDEFESMMHL) form a binds actin region.

In terms of assembly, binds actin. As to expression, highly expressed in adult and fetal brain. Expressed at intermediate levels in the lung and liver.

Its subcellular location is the cytoplasm. The protein localises to the cytoskeleton. Its function is as follows. Plays a role in cytoskeletal rearrangements during the late wrapping and/or compaction phases of myelinogenesis as well as in maintenance and stability of myelin sheath in the adult. May play an important role in late-stage oligodendroglia maturation, myelin/Ranvier node formation during CNS development, and in the maintenance and plasticity of related structures in the mature CNS. The polypeptide is Ermin (ERMN) (Homo sapiens (Human)).